Reading from the N-terminus, the 590-residue chain is Aspartate--tRNA(Asp/Asn) ligase (590 aa).

Residue Glu175 participates in L-aspartate binding. The tract at residues 199–202 is aspartate; it reads QQFK. 2 residues coordinate L-aspartate: Arg221 and His452. An ATP-binding site is contributed by 221-223; it reads RDE. Glu485 contributes to the ATP binding site. L-aspartate is bound at residue Arg492. Residue 537–540 coordinates ATP; that stretch reads GIDR.

Belongs to the class-II aminoacyl-tRNA synthetase family. Type 1 subfamily. In terms of assembly, homodimer.

Its subcellular location is the cytoplasm. It catalyses the reaction tRNA(Asx) + L-aspartate + ATP = L-aspartyl-tRNA(Asx) + AMP + diphosphate. Aspartyl-tRNA synthetase with relaxed tRNA specificity since it is able to aspartylate not only its cognate tRNA(Asp) but also tRNA(Asn). Reaction proceeds in two steps: L-aspartate is first activated by ATP to form Asp-AMP and then transferred to the acceptor end of tRNA(Asp/Asn). The polypeptide is Aspartate--tRNA(Asp/Asn) ligase (Dinoroseobacter shibae (strain DSM 16493 / NCIMB 14021 / DFL 12)).